The sequence spans 92 residues: uncharacterized protein (92 aa).

This is an uncharacterized protein from Haemophilus influenzae (strain ATCC 51907 / DSM 11121 / KW20 / Rd).